The following is a 428-amino-acid chain: Phosphomethylpyrimidine synthase 2 (428 aa).

Substrate contacts are provided by residues Met-94, Tyr-123, His-162, Ser-184–Gly-186, Asn-225–Arg-228, and Glu-264. His-268 is a Zn(2+) binding site. Tyr-291 contributes to the substrate binding site. His-332 contacts Zn(2+). 3 residues coordinate [4Fe-4S] cluster: Cys-408, Cys-411, and Cys-415.

It belongs to the ThiC family. [4Fe-4S] cluster serves as cofactor.

It carries out the reaction 5-amino-1-(5-phospho-beta-D-ribosyl)imidazole + S-adenosyl-L-methionine = 4-amino-2-methyl-5-(phosphooxymethyl)pyrimidine + CO + 5'-deoxyadenosine + formate + L-methionine + 3 H(+). Its pathway is cofactor biosynthesis; thiamine diphosphate biosynthesis. Functionally, catalyzes the synthesis of the hydroxymethylpyrimidine phosphate (HMP-P) moiety of thiamine from aminoimidazole ribotide (AIR) in a radical S-adenosyl-L-methionine (SAM)-dependent reaction. The sequence is that of Phosphomethylpyrimidine synthase 2 from Methanosarcina acetivorans (strain ATCC 35395 / DSM 2834 / JCM 12185 / C2A).